A 188-amino-acid polypeptide reads, in one-letter code: MIFKDYDFLQNYDLKNFEEKVKIYKELLSKFNRIHNLTHLKNIDENIFDSIKILDFYDFSKAKNIADIGSGAGFPAVFLAFLLQGNFHLFEPNPKKAAFLRTLKIECELSNLHIYKEKVQEYQNIFKADIITSRALMDVKPLLEICKNLKDENTVFILWKGSEIYQELENIKDYEIFENNLRKYCILK.

Residues G69, F74, V119–Q120, and R134 contribute to the S-adenosyl-L-methionine site.

Belongs to the methyltransferase superfamily. RNA methyltransferase RsmG family.

The protein resides in the cytoplasm. The catalysed reaction is guanosine(527) in 16S rRNA + S-adenosyl-L-methionine = N(7)-methylguanosine(527) in 16S rRNA + S-adenosyl-L-homocysteine. In terms of biological role, specifically methylates the N7 position of guanine in position 527 of 16S rRNA. The protein is Ribosomal RNA small subunit methyltransferase G of Campylobacter jejuni (strain RM1221).